The chain runs to 474 residues: H/ACA ribonucleoprotein complex subunit cbf5 (474 aa).

The active-site Nucleophile is the aspartate 100. The PUA domain maps to 271 to 346 (YKRIVVKDSA…VVAKVKRCIM (76 aa)). Disordered stretches follow at residues 361-391 (SMKKKTLKKEGKLDKYGRPNENTPADWSKSY) and 406-474 (PVVA…KKSE). Positions 368 to 378 (KKEGKLDKYGR) are enriched in basic and acidic residues. Residues 406-419 (PVVAPAAPTVEAEV) show a composition bias toward low complexity. The span at 423 to 434 (EDSKKRKSVESS) shows a compositional bias: basic and acidic residues. The tract at residues 434 to 468 (SEKDEDEAAKKEEKRRKKEAKKEKKEKKEKKEKKE) is 7 X 3 AA approximate tandem repeats of K-K-E. 7 repeat units span residues 443 to 445 (KKE), 450 to 452 (KKE), 454 to 456 (KKE), 457 to 459 (KKE), 460 to 462 (KKE), 463 to 465 (KKE), and 466 to 468 (KKE). Basic residues predominate over residues 446 to 474 (EKRRKKEAKKEKKEKKEKKEKKEKKKKSE).

It belongs to the pseudouridine synthase TruB family. Component of the small nucleolar ribonucleoprotein particles containing H/ACA-type snoRNAs (H/ACA snoRNPs).

Its subcellular location is the nucleus. It is found in the nucleolus. The enzyme catalyses uridine in 5S rRNA = pseudouridine in 5S rRNA. It carries out the reaction uridine in snRNA = pseudouridine in snRNA. The catalysed reaction is a uridine in mRNA = a pseudouridine in mRNA. Its function is as follows. Catalytic subunit of H/ACA small nucleolar ribonucleoprotein (H/ACA snoRNP) complex, which catalyzes pseudouridylation of rRNA. This involves the isomerization of uridine such that the ribose is subsequently attached to C5, instead of the normal N1. Pseudouridine ('psi') residues may serve to stabilize the conformation of rRNAs and play a central role in ribosomal RNA processing. The H/ACA snoRNP complex also mediates pseudouridylation of other types of RNAs. Catalyzes pseudouridylation at position 93 in U2 snRNA. Also catalyzes pseudouridylation of mRNAs; H/ACA-type snoRNAs probably guide pseudouridylation of mRNAs. The chain is H/ACA ribonucleoprotein complex subunit cbf5 (cbf5) from Schizosaccharomyces pombe (strain 972 / ATCC 24843) (Fission yeast).